A 119-amino-acid polypeptide reads, in one-letter code: Large ribosomal subunit protein uL18 (119 aa).

This sequence belongs to the universal ribosomal protein uL18 family. As to quaternary structure, part of the 50S ribosomal subunit; part of the 5S rRNA/L5/L18/L25 subcomplex. Contacts the 5S and 23S rRNAs.

Its function is as follows. This is one of the proteins that bind and probably mediate the attachment of the 5S RNA into the large ribosomal subunit, where it forms part of the central protuberance. This Endomicrobium trichonymphae protein is Large ribosomal subunit protein uL18.